The following is a 436-amino-acid chain: GTPase Der (436 aa).

EngA-type G domains are found at residues 4-167 (PIVA…GEEE) and 176-351 (IRLS…ENHK). GTP-binding positions include 10–17 (GRPNVGKS), 57–61 (DTGGI), 119–122 (NKVD), 182–189 (GRPNVGKS), 229–233 (DTAGM), and 294–297 (NKWD). Residues 352–436 (KRVQSSTLNE…PIHIIARKRN (85 aa)) form the KH-like domain.

The protein belongs to the TRAFAC class TrmE-Era-EngA-EngB-Septin-like GTPase superfamily. EngA (Der) GTPase family. As to quaternary structure, associates with the 50S ribosomal subunit.

Its function is as follows. GTPase that plays an essential role in the late steps of ribosome biogenesis. The protein is GTPase Der of Staphylococcus aureus (strain Mu3 / ATCC 700698).